A 419-amino-acid chain; its full sequence is MASTFSKLLTGRNASLLFATLGTSALTTGYLVNRQKVCAEARDQHKLFPPSADYPDLRKHNNCMAECLTPSIYAKLRNKVTANGYTLDQCIQTGVDNPGHPFIKTVGMVAGDEESYEVFADLFDPVIKLRHNGYDPRVMKHPTDLDASKITQGQFDERYVLSSRVRTGRSIRGLSLPPACSRAEAREVENVAITALEGLKGDLAGRYYRLSEMTEQDQQRLIDDHFLFDKPVSPLLTCAGMARDWPDARGIWHNYDNTFLIWINEEDHTRVISMEKGGNMKRVFERFCRGLKEVERLIQERGWEFMWNERLGYILTCPSNLGTGLRAGVHVRIPKLSKDPRFSKILENLRLQKRGTGGVDTRAVADVYDISNIDRIGRSEVELVQIVIDGVNYLVDCEKKLERGQDIKVPPPLPQFGKK.

A mitochondrion-targeting transit peptide spans 1 to 39 (MASTFSKLLTGRNASLLFATLGTSALTTGYLVNRQKVCA). The interval 40–64 (EARDQHKLFPPSADYPDLRKHNNCM) is cardiolipin-binding. In terms of domain architecture, Phosphagen kinase N-terminal spans 46-132 (KLFPPSADYP…FDPVIKLRHN (87 aa)). In terms of domain architecture, Phosphagen kinase C-terminal spans 159–401 (YVLSSRVRTG…NYLVDCEKKL (243 aa)). ATP contacts are provided by residues 162-166 (SSRVR) and His-225. Tyr-255 carries the post-translational modification Phosphotyrosine. Residues Arg-270, Arg-326, 354-359 (RGTGGV), and Asp-369 contribute to the ATP site. Thr-356 is subject to Phosphothreonine.

The protein belongs to the ATP:guanido phosphotransferase family. In terms of assembly, exists as an octamer composed of four CKMT2 homodimers.

Its subcellular location is the mitochondrion inner membrane. The catalysed reaction is creatine + ATP = N-phosphocreatine + ADP + H(+). Its function is as follows. Reversibly catalyzes the transfer of phosphate between ATP and various phosphogens (e.g. creatine phosphate). Creatine kinase isoenzymes play a central role in energy transduction in tissues with large, fluctuating energy demands, such as skeletal muscle, heart, brain and spermatozoa. This Oryctolagus cuniculus (Rabbit) protein is Creatine kinase S-type, mitochondrial (CKMT2).